The chain runs to 274 residues: Diaminopimelate epimerase (274 aa).

Substrate is bound by residues asparagine 11, glutamine 44, and asparagine 64. The active-site Proton donor is the cysteine 73. Residues glycine 74–asparagine 75, asparagine 157, asparagine 190, and glutamate 208–arginine 209 contribute to the substrate site. The Proton acceptor role is filled by cysteine 217. Glycine 218–serine 219 lines the substrate pocket.

Belongs to the diaminopimelate epimerase family. As to quaternary structure, homodimer.

The protein resides in the cytoplasm. It carries out the reaction (2S,6S)-2,6-diaminopimelate = meso-2,6-diaminopimelate. It participates in amino-acid biosynthesis; L-lysine biosynthesis via DAP pathway; DL-2,6-diaminopimelate from LL-2,6-diaminopimelate: step 1/1. Catalyzes the stereoinversion of LL-2,6-diaminopimelate (L,L-DAP) to meso-diaminopimelate (meso-DAP), a precursor of L-lysine and an essential component of the bacterial peptidoglycan. This Actinobacillus succinogenes (strain ATCC 55618 / DSM 22257 / CCUG 43843 / 130Z) protein is Diaminopimelate epimerase.